Here is a 257-residue protein sequence, read N- to C-terminus: AA9 family lytic polysaccharide monooxygenase U (257 aa).

The N-terminal stretch at 1 to 19 is a signal peptide; sequence MKLYLAAFLGAVATPGAFA. Histidine 20 contacts Cu(2+). 2 N-linked (GlcNAc...) asparagine glycosylation sites follow: asparagine 29 and asparagine 71. Cysteine 74 and cysteine 194 are joined by a disulfide. Histidine 113 serves as a coordination point for Cu(2+). N-linked (GlcNAc...) asparagine glycosylation occurs at asparagine 161. An O2-binding site is contributed by glutamine 189. Tyrosine 191 is a Cu(2+) binding site.

The protein belongs to the polysaccharide monooxygenase AA9 family. Cu(2+) serves as cofactor.

The protein resides in the secreted. The enzyme catalyses [(1-&gt;4)-beta-D-glucosyl]n+m + reduced acceptor + O2 = 4-dehydro-beta-D-glucosyl-[(1-&gt;4)-beta-D-glucosyl]n-1 + [(1-&gt;4)-beta-D-glucosyl]m + acceptor + H2O.. Functionally, lytic polysaccharide monooxygenase (LPMO) that depolymerizes crystalline and amorphous polysaccharides via the oxidation of scissile alpha- or beta-(1-4)-glycosidic bonds, yielding C1 and C4 oxidation products. Catalysis by LPMOs requires the reduction of the active-site copper from Cu(II) to Cu(I) by a reducing agent and H(2)O(2) or O(2) as a cosubstrate. Shows no activity on wheat arabinoxylan, konjac glucomannan, acetylated spruce galactoglucomannan, or cellopentaose. This is AA9 family lytic polysaccharide monooxygenase U from Thermothielavioides terrestris (strain ATCC 38088 / NRRL 8126) (Thielavia terrestris).